Reading from the N-terminus, the 127-residue chain is Small ribosomal subunit protein uS11 (127 aa).

The protein belongs to the universal ribosomal protein uS11 family. As to quaternary structure, part of the 30S ribosomal subunit. Interacts with proteins S7 and S18. Binds to IF-3.

Its function is as follows. Located on the platform of the 30S subunit, it bridges several disparate RNA helices of the 16S rRNA. Forms part of the Shine-Dalgarno cleft in the 70S ribosome. The polypeptide is Small ribosomal subunit protein uS11 (Prosthecochloris aestuarii (strain DSM 271 / SK 413)).